The following is a 69-amino-acid chain: Putative membrane protein insertion efficiency factor (69 aa).

This sequence belongs to the UPF0161 family.

Its subcellular location is the cell inner membrane. Its function is as follows. Could be involved in insertion of integral membrane proteins into the membrane. The protein is Putative membrane protein insertion efficiency factor of Nitrosomonas europaea (strain ATCC 19718 / CIP 103999 / KCTC 2705 / NBRC 14298).